A 150-amino-acid polypeptide reads, in one-letter code: MSKVEESIEVGVPVHTAYNQWTQFETFPQFMSGVERIEQRTDTLTHWVTSVNGVHKEFDAEITEQIPDERVAWTTVGGEAEQAGVVTFHRLDDDHTKVMLQMDFHPDSVTEKVGDKLGFVKRQTKGDLERFKKFIEERGQETGGWRGAVI.

This is an uncharacterized protein from Streptomyces lincolnensis.